The sequence spans 296 residues: Cytidine deaminase (296 aa).

2 CMP/dCMP-type deaminase domains span residues 48–168 and 187–296; these read DADA…FGPV and QNMN…FIEE. A substrate-binding site is contributed by 89–91; the sequence is NME. Residue His102 coordinates Zn(2+). Catalysis depends on Glu104, which acts as the Proton donor. Cys129 and Cys132 together coordinate Zn(2+).

The protein belongs to the cytidine and deoxycytidylate deaminase family. As to quaternary structure, homodimer. It depends on Zn(2+) as a cofactor.

It catalyses the reaction cytidine + H2O + H(+) = uridine + NH4(+). The catalysed reaction is 2'-deoxycytidine + H2O + H(+) = 2'-deoxyuridine + NH4(+). This enzyme scavenges exogenous and endogenous cytidine and 2'-deoxycytidine for UMP synthesis. The polypeptide is Cytidine deaminase (Pectobacterium carotovorum subsp. carotovorum (strain PC1)).